The following is a 208-amino-acid chain: Outer-membrane lipoprotein LolB (208 aa).

Residues 1–23 (MKPIQKLSLFRLLPLSCVLLLTA) form the signal peptide. Residue C24 is the site of N-palmitoyl cysteine attachment. C24 is lipidated: S-diacylglycerol cysteine.

This sequence belongs to the LolB family. In terms of assembly, monomer.

Its subcellular location is the cell outer membrane. Functionally, plays a critical role in the incorporation of lipoproteins in the outer membrane after they are released by the LolA protein. The polypeptide is Outer-membrane lipoprotein LolB (Photorhabdus laumondii subsp. laumondii (strain DSM 15139 / CIP 105565 / TT01) (Photorhabdus luminescens subsp. laumondii)).